A 75-amino-acid polypeptide reads, in one-letter code: DNA-directed RNA polymerase subunit omega (75 aa).

The protein belongs to the RNA polymerase subunit omega family. As to quaternary structure, in cyanobacteria the RNAP catalytic core is composed of 2 alpha, 1 beta, 1 beta', 1 gamma and 1 omega subunit. When a sigma factor is associated with the core the holoenzyme is formed, which can initiate transcription.

The enzyme catalyses RNA(n) + a ribonucleoside 5'-triphosphate = RNA(n+1) + diphosphate. In terms of biological role, promotes RNA polymerase assembly. Latches the N- and C-terminal regions of the beta' subunit thereby facilitating its interaction with the beta and alpha subunits. The sequence is that of DNA-directed RNA polymerase subunit omega from Synechococcus sp. (strain CC9605).